Reading from the N-terminus, the 110-residue chain is Large ribosomal subunit protein uL22 (110 aa).

This sequence belongs to the universal ribosomal protein uL22 family. As to quaternary structure, part of the 50S ribosomal subunit.

In terms of biological role, this protein binds specifically to 23S rRNA; its binding is stimulated by other ribosomal proteins, e.g. L4, L17, and L20. It is important during the early stages of 50S assembly. It makes multiple contacts with different domains of the 23S rRNA in the assembled 50S subunit and ribosome. Its function is as follows. The globular domain of the protein is located near the polypeptide exit tunnel on the outside of the subunit, while an extended beta-hairpin is found that lines the wall of the exit tunnel in the center of the 70S ribosome. This chain is Large ribosomal subunit protein uL22, found in Verminephrobacter eiseniae (strain EF01-2).